A 476-amino-acid polypeptide reads, in one-letter code: Glycogen synthase (476 aa).

Residue Lys-15 coordinates ADP-alpha-D-glucose.

The protein belongs to the glycosyltransferase 1 family. Bacterial/plant glycogen synthase subfamily.

It carries out the reaction [(1-&gt;4)-alpha-D-glucosyl](n) + ADP-alpha-D-glucose = [(1-&gt;4)-alpha-D-glucosyl](n+1) + ADP + H(+). It functions in the pathway glycan biosynthesis; glycogen biosynthesis. In terms of biological role, synthesizes alpha-1,4-glucan chains using ADP-glucose. In Marinomonas sp. (strain MWYL1), this protein is Glycogen synthase.